A 286-amino-acid chain; its full sequence is Bifunctional protein FolD (286 aa).

NADP(+) is bound by residues 168–170 (GRG), Thr-195, and Val-236.

It belongs to the tetrahydrofolate dehydrogenase/cyclohydrolase family. Homodimer.

The enzyme catalyses (6R)-5,10-methylene-5,6,7,8-tetrahydrofolate + NADP(+) = (6R)-5,10-methenyltetrahydrofolate + NADPH. The catalysed reaction is (6R)-5,10-methenyltetrahydrofolate + H2O = (6R)-10-formyltetrahydrofolate + H(+). Its pathway is one-carbon metabolism; tetrahydrofolate interconversion. Functionally, catalyzes the oxidation of 5,10-methylenetetrahydrofolate to 5,10-methenyltetrahydrofolate and then the hydrolysis of 5,10-methenyltetrahydrofolate to 10-formyltetrahydrofolate. The polypeptide is Bifunctional protein FolD (Mycolicibacterium fortuitum (Mycobacterium fortuitum)).